The sequence spans 213 residues: Adenylate kinase (213 aa).

10–15 (GAGKGT) lines the ATP pocket. The segment at 30-59 (STGNLLRDEVKSKTDLGVDIEKLISNGKFV) is NMP. Residues T31, R36, 57 to 59 (KFV), 85 to 88 (GYPR), and Q92 contribute to the AMP site. The LID stretch occupies residues 126-162 (GRMTCEKCNMTLNEYFNKEQIELHPCGVEHLKKRKDD). Position 127 (R127) interacts with ATP. R159 and R170 together coordinate AMP. Residue G198 coordinates ATP.

Belongs to the adenylate kinase family. As to quaternary structure, monomer.

It localises to the cytoplasm. It catalyses the reaction AMP + ATP = 2 ADP. It participates in purine metabolism; AMP biosynthesis via salvage pathway; AMP from ADP: step 1/1. Its function is as follows. Catalyzes the reversible transfer of the terminal phosphate group between ATP and AMP. Plays an important role in cellular energy homeostasis and in adenine nucleotide metabolism. The protein is Adenylate kinase of Pelagibacter ubique (strain HTCC1062).